The chain runs to 364 residues: Probable dual-specificity RNA methyltransferase RlmN (364 aa).

The active-site Proton acceptor is Glu107. A Radical SAM core domain is found at 113-346 (HEYGNSVCVT…ATIRREQGSD (234 aa)). A disulfide bond links Cys120 and Cys351. [4Fe-4S] cluster-binding residues include Cys127, Cys131, and Cys134. S-adenosyl-L-methionine-binding positions include 177–178 (GE), Ser209, 232–234 (SLH), and Asn308. Cys351 serves as the catalytic S-methylcysteine intermediate.

It belongs to the radical SAM superfamily. RlmN family. Requires [4Fe-4S] cluster as cofactor.

It localises to the cytoplasm. The enzyme catalyses adenosine(2503) in 23S rRNA + 2 reduced [2Fe-2S]-[ferredoxin] + 2 S-adenosyl-L-methionine = 2-methyladenosine(2503) in 23S rRNA + 5'-deoxyadenosine + L-methionine + 2 oxidized [2Fe-2S]-[ferredoxin] + S-adenosyl-L-homocysteine. It carries out the reaction adenosine(37) in tRNA + 2 reduced [2Fe-2S]-[ferredoxin] + 2 S-adenosyl-L-methionine = 2-methyladenosine(37) in tRNA + 5'-deoxyadenosine + L-methionine + 2 oxidized [2Fe-2S]-[ferredoxin] + S-adenosyl-L-homocysteine. Its function is as follows. Specifically methylates position 2 of adenine 2503 in 23S rRNA and position 2 of adenine 37 in tRNAs. Confers resistance to some classes of antibiotics. This is Probable dual-specificity RNA methyltransferase RlmN from Staphylococcus epidermidis (strain ATCC 12228 / FDA PCI 1200).